Here is an 827-residue protein sequence, read N- to C-terminus: Probable beta-glucosidase H (827 aa).

Asp-223 is a catalytic residue. The PA14 domain occupies 387-546 (RLLTNAVMHF…DSAEMVRSAV (160 aa)). 4 N-linked (GlcNAc...) asparagine glycosylation sites follow: Asn-471, Asn-594, Asn-600, and Asn-625.

It belongs to the glycosyl hydrolase 3 family.

The protein localises to the secreted. It catalyses the reaction Hydrolysis of terminal, non-reducing beta-D-glucosyl residues with release of beta-D-glucose.. It functions in the pathway glycan metabolism; cellulose degradation. Functionally, beta-glucosidases are one of a number of cellulolytic enzymes involved in the degradation of cellulosic biomass. Catalyzes the last step releasing glucose from the inhibitory cellobiose. This chain is Probable beta-glucosidase H (bglH), found in Aspergillus oryzae (strain ATCC 42149 / RIB 40) (Yellow koji mold).